A 150-amino-acid polypeptide reads, in one-letter code: Probable histone H2A.5 (150 aa).

Over residues 1-12 (MESSQATTKPTR) the composition is skewed to low complexity. 2 disordered regions span residues 1–28 (MESSQATTKPTRGAGGRKGGDRKKSVSK) and 130–150 (KSTASSSQAEKASATKSPKKA). Polar residues predominate over residues 131-150 (STASSSQAEKASATKSPKKA). The residue at position 146 (Ser-146) is a Phosphoserine. The short motif at 146 to 149 (SPKK) is the SPKK motif element.

Belongs to the histone H2A family. As to quaternary structure, the nucleosome is a histone octamer containing two molecules each of H2A, H2B, H3 and H4 assembled in one H3-H4 heterotetramer and two H2A-H2B heterodimers. The octamer wraps approximately 147 bp of DNA. Not ubiquitinated.

It localises to the nucleus. Its subcellular location is the chromosome. Its function is as follows. Core component of nucleosome. Nucleosomes wrap and compact DNA into chromatin, limiting DNA accessibility to the cellular machineries which require DNA as a template. Histones thereby play a central role in transcription regulation, DNA repair, DNA replication and chromosomal stability. DNA accessibility is regulated via a complex set of post-translational modifications of histones, also called histone code, and nucleosome remodeling. This is Probable histone H2A.5 from Arabidopsis thaliana (Mouse-ear cress).